The primary structure comprises 312 residues: Ribosomal protein L11 methyltransferase (312 aa).

Thr-162, Gly-183, Asp-205, and Asn-248 together coordinate S-adenosyl-L-methionine.

It belongs to the methyltransferase superfamily. PrmA family.

The protein localises to the cytoplasm. The catalysed reaction is L-lysyl-[protein] + 3 S-adenosyl-L-methionine = N(6),N(6),N(6)-trimethyl-L-lysyl-[protein] + 3 S-adenosyl-L-homocysteine + 3 H(+). In terms of biological role, methylates ribosomal protein L11. In Geobacillus thermodenitrificans (strain NG80-2), this protein is Ribosomal protein L11 methyltransferase.